A 144-amino-acid polypeptide reads, in one-letter code: Large ribosomal subunit protein uL16 (144 aa).

This sequence belongs to the universal ribosomal protein uL16 family. In terms of assembly, part of the 50S ribosomal subunit.

Its function is as follows. Binds 23S rRNA and is also seen to make contacts with the A and possibly P site tRNAs. The chain is Large ribosomal subunit protein uL16 from Porphyromonas gingivalis (strain ATCC 33277 / DSM 20709 / CIP 103683 / JCM 12257 / NCTC 11834 / 2561).